The sequence spans 753 residues: Probable tubulin--tyrosine ligase PBY1 (753 aa).

Residues 343–734 form the TTL domain; the sequence is MEYIYKPLTH…PIFNENRNKT (392 aa).

Belongs to the tubulin--tyrosine ligase family. The cofactor is Mg(2+). Requires K(+) as cofactor.

It is found in the cytoplasm. Its subcellular location is the P-body. It catalyses the reaction C-terminal L-alpha-aminoacyl-L-glutamyl-L-glutamyl-[tubulin] + L-tyrosine + ATP = C-terminal L-alpha-aminoacyl-L-glutamyl-L-glutamyl-L-tyrosyl-[tubulin] + ADP + phosphate + H(+). Functionally, probable P-body-associated tubulin--tyrosine ligase. The chain is Probable tubulin--tyrosine ligase PBY1 (PBY1) from Saccharomyces cerevisiae (strain ATCC 204508 / S288c) (Baker's yeast).